We begin with the raw amino-acid sequence, 421 residues long: Testin (421 aa).

The 108-residue stretch at 92-199 (MILTNPVAAK…GDVKLPCEMD (108 aa)) folds into the PET domain. The disordered stretch occupies residues 133–164 (EKQPVAGSEGAQYRKKQLAKQLPAHDQDPSKC). Basic and acidic residues predominate over residues 155 to 164 (PAHDQDPSKC). 3 consecutive LIM zinc-binding domains span residues 234–297 (YSCY…CDSE), 299–359 (PRCA…NHAV), and 362–421 (QGCH…KRMS).

It belongs to the prickle / espinas / testin family. As to quaternary structure, interacts via LIM domain 1 with ZYX. Interacts (via LIM domain 3) with ENAH and VASP. Interacts with ALKBH4, talin, actin, alpha-actinin, GRIP1 and PXN. Interacts (via LIM domain 2) with ACTL7A (via N-terminus). Heterodimer with ACTL7A; the heterodimer interacts with ENAH to form a heterotrimer.

It is found in the cytoplasm. Its subcellular location is the cell junction. The protein resides in the focal adhesion. Its function is as follows. Scaffold protein that may play a role in cell adhesion, cell spreading and in the reorganization of the actin cytoskeleton. Plays a role in the regulation of cell proliferation. May act as a tumor suppressor. This Pan troglodytes (Chimpanzee) protein is Testin (TES).